The primary structure comprises 221 residues: Histone H1C (221 aa).

Disordered regions lie at residues 1 to 43 (MSDP…PPVS) and 113 to 221 (AAKK…AKKA). The H15 domain maps to 38–112 (THPPVSEMVF…GALGSFKLPA (75 aa)). 2 stretches are compositionally biased toward basic residues: residues 141-167 (KVKK…KTTK) and 175-221 (AAKK…AKKA).

The protein belongs to the histone H1/H5 family.

It is found in the nucleus. The protein localises to the chromosome. Its function is as follows. Histones H1 are necessary for the condensation of nucleosome chains into higher-order structures. This chain is Histone H1C, found in Chironomus tentans (Midge).